The following is a 330-amino-acid chain: Ketol-acid reductoisomerase (NADP(+)) (330 aa).

One can recognise a KARI N-terminal Rossmann domain in the interval 2–182; that stretch reads ARLYYDTDAN…GGTRAGILET (181 aa). Residues 25–28, S51, S53, and 83–86 contribute to the NADP(+) site; these read YGSQ and DEVQ. H108 is a catalytic residue. G134 lines the NADP(+) pocket. One can recognise a KARI C-terminal knotted domain in the interval 183 to 328; that stretch reads TFREETETDL…RELRAMFSWL (146 aa). Mg(2+)-binding residues include D191, E195, E227, and E231. S252 lines the substrate pocket.

The protein belongs to the ketol-acid reductoisomerase family. Mg(2+) is required as a cofactor.

It catalyses the reaction (2R)-2,3-dihydroxy-3-methylbutanoate + NADP(+) = (2S)-2-acetolactate + NADPH + H(+). It carries out the reaction (2R,3R)-2,3-dihydroxy-3-methylpentanoate + NADP(+) = (S)-2-ethyl-2-hydroxy-3-oxobutanoate + NADPH + H(+). It functions in the pathway amino-acid biosynthesis; L-isoleucine biosynthesis; L-isoleucine from 2-oxobutanoate: step 2/4. The protein operates within amino-acid biosynthesis; L-valine biosynthesis; L-valine from pyruvate: step 2/4. In terms of biological role, involved in the biosynthesis of branched-chain amino acids (BCAA). Catalyzes an alkyl-migration followed by a ketol-acid reduction of (S)-2-acetolactate (S2AL) to yield (R)-2,3-dihydroxy-isovalerate. In the isomerase reaction, S2AL is rearranged via a Mg-dependent methyl migration to produce 3-hydroxy-3-methyl-2-ketobutyrate (HMKB). In the reductase reaction, this 2-ketoacid undergoes a metal-dependent reduction by NADPH to yield (R)-2,3-dihydroxy-isovalerate. In Synechococcus sp. (strain JA-2-3B'a(2-13)) (Cyanobacteria bacterium Yellowstone B-Prime), this protein is Ketol-acid reductoisomerase (NADP(+)).